The primary structure comprises 539 residues: CTP synthase (539 aa).

The segment at 1–268 (MADTKYIFVT…DETVLRKVGL (268 aa)) is amidoligase domain. S15 contacts CTP. Position 15 (S15) interacts with UTP. Position 16-21 (16-21 (SLGKGI)) interacts with ATP. Y56 lines the L-glutamine pocket. D73 is an ATP binding site. D73 and E143 together coordinate Mg(2+). CTP is bound by residues 150–152 (DIE), 189–194 (KTKPTQ), and K225. UTP is bound by residues 189-194 (KTKPTQ) and K225. One can recognise a Glutamine amidotransferase type-1 domain in the interval 294-536 (TIALVGKYVE…IREAIKTRKK (243 aa)). G356 is a binding site for L-glutamine. C383 functions as the Nucleophile; for glutamine hydrolysis in the catalytic mechanism. Residues 384-387 (LGMQ), E407, and R464 each bind L-glutamine. Residues H509 and E511 contribute to the active site.

Belongs to the CTP synthase family. As to quaternary structure, homotetramer.

It catalyses the reaction UTP + L-glutamine + ATP + H2O = CTP + L-glutamate + ADP + phosphate + 2 H(+). It carries out the reaction L-glutamine + H2O = L-glutamate + NH4(+). The enzyme catalyses UTP + NH4(+) + ATP = CTP + ADP + phosphate + 2 H(+). It functions in the pathway pyrimidine metabolism; CTP biosynthesis via de novo pathway; CTP from UDP: step 2/2. Allosterically activated by GTP, when glutamine is the substrate; GTP has no effect on the reaction when ammonia is the substrate. The allosteric effector GTP functions by stabilizing the protein conformation that binds the tetrahedral intermediate(s) formed during glutamine hydrolysis. Inhibited by the product CTP, via allosteric rather than competitive inhibition. Functionally, catalyzes the ATP-dependent amination of UTP to CTP with either L-glutamine or ammonia as the source of nitrogen. Regulates intracellular CTP levels through interactions with the four ribonucleotide triphosphates. The chain is CTP synthase from Porphyromonas gingivalis (strain ATCC 33277 / DSM 20709 / CIP 103683 / JCM 12257 / NCTC 11834 / 2561).